The chain runs to 85 residues: Growth factor (85 aa).

A signal peptide spans 1 to 19 (MVPRDLVATLLCAMCIVQA). In terms of domain architecture, EGF-like spans 33 to 77 (RIKLCNDDYKNYCLNNGTCFTVALNNVSLNPFCACHINYVGSRCQ). 3 disulfide bridges follow: Cys-37–Cys-51, Cys-45–Cys-65, and Cys-67–Cys-76. N-linked (GlcNAc...) asparagine; by host glycans are attached at residues Asn-48 and Asn-58.

It localises to the secreted. In terms of biological role, stimulates the growth of some tissues. The sequence is that of Growth factor (MGF) from Oryctolagus cuniculus (Rabbit).